The sequence spans 599 residues: Elongation factor 4 (599 aa).

A tr-type G domain is found at 5 to 187 (SHIRNFSIIA…RLVAVIPPPT (183 aa)). GTP is bound by residues 17 to 22 (DHGKST) and 134 to 137 (NKMD).

Belongs to the TRAFAC class translation factor GTPase superfamily. Classic translation factor GTPase family. LepA subfamily.

It localises to the cell inner membrane. It carries out the reaction GTP + H2O = GDP + phosphate + H(+). In terms of biological role, required for accurate and efficient protein synthesis under certain stress conditions. May act as a fidelity factor of the translation reaction, by catalyzing a one-codon backward translocation of tRNAs on improperly translocated ribosomes. Back-translocation proceeds from a post-translocation (POST) complex to a pre-translocation (PRE) complex, thus giving elongation factor G a second chance to translocate the tRNAs correctly. Binds to ribosomes in a GTP-dependent manner. The sequence is that of Elongation factor 4 from Stutzerimonas stutzeri (strain A1501) (Pseudomonas stutzeri).